We begin with the raw amino-acid sequence, 380 residues long: Alcohol dehydrogenase (380 aa).

Residues Cys48, Thr50, His70, Cys100, Cys103, Cys106, Cys114, and Cys178 each coordinate Zn(2+). 2 residues coordinate an alcohol: Thr50 and His70. An NAD(+)-binding site is contributed by Thr50. NAD(+) contacts are provided by residues 203-208 (GLGAVG), Asp227, Arg232, Thr273, Val296, 296-298 (VGV), Phe323, and Arg373.

Belongs to the zinc-containing alcohol dehydrogenase family. As to quaternary structure, homodimer. Requires Zn(2+) as cofactor.

It is found in the cytoplasm. The enzyme catalyses a primary alcohol + NAD(+) = an aldehyde + NADH + H(+). The catalysed reaction is a secondary alcohol + NAD(+) = a ketone + NADH + H(+). This Malus domestica (Apple) protein is Alcohol dehydrogenase (ADH).